Here is a 324-residue protein sequence, read N- to C-terminus: Dolichyl-phosphate beta-glucosyltransferase (324 aa).

Residues 1–7 (MAPLLLQ) lie on the Lumenal side of the membrane. A helical; Signal-anchor for type II membrane protein transmembrane segment spans residues 8 to 28 (LAVLGAALAAAALVLISIVAF). Topologically, residues 29–324 (TTATKMPALH…WRLEQTRKMN (296 aa)) are cytoplasmic.

Belongs to the glycosyltransferase 2 family. In terms of tissue distribution, expressed in pancreas, placenta, liver, heart, brain, kidney, skeletal muscle, and lung.

It localises to the endoplasmic reticulum membrane. The enzyme catalyses a di-trans,poly-cis-dolichyl phosphate + UDP-alpha-D-glucose = a di-trans,poly-cis-dolichyl beta-D-glucosyl phosphate + UDP. It functions in the pathway protein modification; protein glycosylation. Its function is as follows. Dolichyl-phosphate beta-glucosyltransferase that operates in the biosynthetic pathway of dolichol-linked oligosaccharides, the glycan precursors employed in protein asparagine (N)-glycosylation. The assembly of dolichol-linked oligosaccharides begins on the cytosolic side of the endoplasmic reticulum membrane and finishes in its lumen. The sequential addition of sugars to dolichol pyrophosphate produces dolichol-linked oligosaccharides containing fourteen sugars, including two GlcNAcs, nine mannoses and three glucoses. Once assembled, the oligosaccharide is transferred from the lipid to nascent proteins by oligosaccharyltransferases. Dolichyl-phosphate beta-glucosyltransferase produces dolichyl beta-D-glucosyl phosphate/Dol-P-Glc, the glucose donor substrate used sequentially by ALG6, ALG8 and ALG10 to add glucose residues on top of the Man(9)GlcNAc(2)-PP-Dol structure. These are the three last steps in the biosynthetic pathway of dolichol-linked oligosaccharides to produce Glc(3)Man(9)GlcNAc(2)-PP-Dol. The enzyme is most probably active on the cytoplasmic side of the endoplasmic reticulum while its product Dol-P-Glc is the substrate for ALG6, ALG8 and ALG11 in the lumen of the endoplasmic reticulum. This is Dolichyl-phosphate beta-glucosyltransferase from Homo sapiens (Human).